The following is a 255-amino-acid chain: MQRYVNFFDKNRRDVHGLLLLDKPTGFSSSFFLNKIKKLFYAKKVGYIGTLDPIATGMLPICFGKATKFASYLLNSDKRYRVLVKLGESTDTFDASGVIIRIADVQCNKEKIEECLKSFLGTSLQIPPMFSSLKYQGLPLYKYARRGVNIPRKSRTIHVYSLYCLNQLNSIIELEIHCSKGTYVRSIVNDIGEYLGCGAHIISLRRLMVGQYIASMMVNIKTIESIFFDKDLNDLEVLDKLDNLLISTETIMCSF.

Asp52 functions as the Nucleophile in the catalytic mechanism. Substrate is bound by residues Tyr80, Tyr183, and Leu204.

Belongs to the pseudouridine synthase TruB family. Type 1 subfamily.

It catalyses the reaction uridine(55) in tRNA = pseudouridine(55) in tRNA. In terms of biological role, responsible for synthesis of pseudouridine from uracil-55 in the psi GC loop of transfer RNAs. The protein is tRNA pseudouridine synthase B of Blochmanniella floridana.